Consider the following 487-residue polypeptide: Cobyric acid synthase (487 aa).

A GATase cobBQ-type domain is found at 251 to 439 (KLKVVAPAYP…CHGVLDHPEA (189 aa)). The active-site Nucleophile is Cys-332. His-431 is a catalytic residue.

It belongs to the CobB/CobQ family. CobQ subfamily.

The protein operates within cofactor biosynthesis; adenosylcobalamin biosynthesis. Its function is as follows. Catalyzes amidations at positions B, D, E, and G on adenosylcobyrinic A,C-diamide. NH(2) groups are provided by glutamine, and one molecule of ATP is hydrogenolyzed for each amidation. This chain is Cobyric acid synthase, found in Dechloromonas aromatica (strain RCB).